The following is a 118-amino-acid chain: V-type proton ATPase subunit G 2 (118 aa).

A disordered region spans residues 25 to 90 (ARKRKARRLK…VQGMQSSQQR (66 aa)). Positions 35–56 (QAKEEAQMEVEQYRREREHEFQ) are enriched in basic and acidic residues. Composition is skewed to polar residues over residues 57 to 69 (SKQQAAMGSQGNL) and 78 to 89 (RRQVQGMQSSQQ).

The protein belongs to the V-ATPase G subunit family. In terms of assembly, V-ATPase is a heteromultimeric enzyme made up of two complexes: the ATP-hydrolytic V1 complex and the proton translocation V0 complex. The V1 complex consists of three catalytic AB heterodimers that form a heterohexamer, three peripheral stalks each consisting of EG heterodimers, one central rotor including subunits D and F, and the regulatory subunits C and H. The proton translocation complex V0 consists of the proton transport subunit a, a ring of proteolipid subunits c9c'', rotary subunit d, subunits e and f, and the accessory subunits ATP6AP1/Ac45 and ATP6AP2/PRR. As to expression, brain.

The protein resides in the melanosome. Its subcellular location is the cytoplasmic vesicle. It is found in the clathrin-coated vesicle membrane. Subunit of the V1 complex of vacuolar(H+)-ATPase (V-ATPase), a multisubunit enzyme composed of a peripheral complex (V1) that hydrolyzes ATP and a membrane integral complex (V0) that translocates protons. V-ATPase is responsible for acidifying and maintaining the pH of intracellular compartments and in some cell types, is targeted to the plasma membrane, where it is responsible for acidifying the extracellular environment. The protein is V-type proton ATPase subunit G 2 (ATP6V1G2) of Homo sapiens (Human).